Consider the following 1014-residue polypeptide: EMILIN-1-A (1014 aa).

The signal sequence occupies residues 1-27; sequence MALYFVYLSTLLALILLGDNWAAGTYA. One can recognise an EMI domain in the interval 53–128; the sequence is HRNWCAYVVT…HGYSGDDCSD (76 aa). 3 disulfides stabilise this stretch: C57–C118, C84–C89, and C117–C126. Disordered stretches follow at residues 125–150 and 811–869; these read DCSD…SDSD and QDFT…ANVP. Over residues 134-150 the composition is skewed to basic and acidic residues; it reads HDSRARPTGEEGRSDSD. Residues 145 to 179 are a coiled coil; sequence GRSDSDRIRQLEEQIQSLNKNLHNLQKKIYEESQR. The region spanning 815-865 is the Collagen-like domain; the sequence is GPPGLPGPQGEKGSKGPPGPRGPLGKEGPQGRVGPVGPPGLRGEQGPPGKD. Residues 840-856 are compositionally biased toward low complexity; the sequence is KEGPQGRVGPVGPPGLR. Residues 866–1012 enclose the C1q domain; sequence ANVPRLSFSA…GMLLYEESED (147 aa).

The protein localises to the secreted. The protein resides in the extracellular space. Its subcellular location is the extracellular matrix. Its function is as follows. May be responsible for anchoring smooth muscle cells to elastic fibers, and may be involved not only in the formation of the elastic fiber, but also in the processes that regulate vessel assembly. Has cell adhesive capacity. This chain is EMILIN-1-A, found in Danio rerio (Zebrafish).